The following is a 1163-amino-acid chain: Receptor-type guanylate cyclase gcy-21 (1163 aa).

A signal peptide spans 1 to 17; the sequence is MLSAVLLLLFFIQNVQN. The Extracellular portion of the chain corresponds to 18 to 490; the sequence is FDKIELEDIT…ENCGPPANNT (473 aa). 6 N-linked (GlcNAc...) asparagine glycosylation sites follow: Asn-102, Asn-296, Asn-322, Asn-346, Asn-466, and Asn-488. The chain crosses the membrane as a helical span at residues 491-511; the sequence is FIIVISVGVAVLIGLAIAAAF. Topologically, residues 512–1163 are cytoplasmic; sequence LYKRYRYERR…QIQEKTYEFS (652 aa). The Protein kinase domain occupies 587-882; the sequence is FNTGSTARAG…QIKRKLKPLT (296 aa). ATP contacts are provided by residues 593 to 601 and Lys-635; that span reads ARAGPFGPI. Positions 901-930 form a coiled coil; that stretch reads TDKLEKDIAERNEELEGEKAKSEALLKMML. Residues 953–1083 form the Guanylate cyclase domain; sequence TVFFSDCPGF…DTVNTASRME (131 aa).

It belongs to the adenylyl cyclase class-4/guanylyl cyclase family. In terms of tissue distribution, expressed in ASG sensory neurons.

It localises to the cell membrane. It carries out the reaction GTP = 3',5'-cyclic GMP + diphosphate. In terms of biological role, guanylate cyclase involved in the production of the second messenger cGMP. Plays a role in dauer formation. In Caenorhabditis elegans, this protein is Receptor-type guanylate cyclase gcy-21.